The following is a 290-amino-acid chain: 33 kDa chaperonin (290 aa).

Disulfide bonds link cysteine 231–cysteine 233 and cysteine 263–cysteine 266.

The protein belongs to the HSP33 family. In terms of processing, under oxidizing conditions two disulfide bonds are formed involving the reactive cysteines. Under reducing conditions zinc is bound to the reactive cysteines and the protein is inactive.

The protein resides in the cytoplasm. Redox regulated molecular chaperone. Protects both thermally unfolding and oxidatively damaged proteins from irreversible aggregation. Plays an important role in the bacterial defense system toward oxidative stress. The sequence is that of 33 kDa chaperonin from Thermotoga maritima (strain ATCC 43589 / DSM 3109 / JCM 10099 / NBRC 100826 / MSB8).